A 420-amino-acid chain; its full sequence is Protein ECERIFERUM 26-like (420 aa).

This sequence belongs to the plant acyltransferase family. Highly expressed in flowers. Expressed in leaves.

Its function is as follows. Involved in biosynthesis of the epicuticular wax. Plays a role in very-long-chain fatty acid (VLCFA) biosynthesis and is required for VLCFA elongation in leaf. Despite its classification as a BAHD acyltransferase based on sequence homology, CER26L does not seem to share the catalytic mechanism of the members of the BAHD family. The polypeptide is Protein ECERIFERUM 26-like (CER26L) (Arabidopsis thaliana (Mouse-ear cress)).